A 145-amino-acid chain; its full sequence is Allergen Sin a 1 (145 aa).

The tract at residues 34–62 is disordered; the sequence is SGSGPSWTLDDEFDFEDDMENPQGPQQRP. The propeptide occupies 40-54; the sequence is WTLDDEFDFEDDMEN. Positions 42 to 53 are enriched in acidic residues; that stretch reads LDDEFDFEDDME.

Belongs to the 2S seed storage albumins family. The protein consists of two chains linked by disulfide bonds.

In terms of biological role, this is a 2S seed storage protein. In Sinapis alba (White mustard), this protein is Allergen Sin a 1.